The following is a 525-amino-acid chain: ATP synthase subunit alpha (525 aa).

Residue 169 to 176 (GDRQTGKT) coordinates ATP.

This sequence belongs to the ATPase alpha/beta chains family. In terms of assembly, F-type ATPases have 2 components, CF(1) - the catalytic core - and CF(0) - the membrane proton channel. CF(1) has five subunits: alpha(3), beta(3), gamma(1), delta(1), epsilon(1). CF(0) has three main subunits: a(1), b(2) and c(9-12). The alpha and beta chains form an alternating ring which encloses part of the gamma chain. CF(1) is attached to CF(0) by a central stalk formed by the gamma and epsilon chains, while a peripheral stalk is formed by the delta and b chains.

The protein resides in the cell membrane. It catalyses the reaction ATP + H2O + 4 H(+)(in) = ADP + phosphate + 5 H(+)(out). In terms of biological role, produces ATP from ADP in the presence of a proton gradient across the membrane. The alpha chain is a regulatory subunit. This chain is ATP synthase subunit alpha, found in Mesoplasma florum (strain ATCC 33453 / NBRC 100688 / NCTC 11704 / L1) (Acholeplasma florum).